A 100-amino-acid chain; its full sequence is Small ribosomal subunit protein uS14c (100 aa).

It belongs to the universal ribosomal protein uS14 family. In terms of assembly, part of the 30S ribosomal subunit.

It localises to the plastid. The protein localises to the chloroplast. In terms of biological role, binds 16S rRNA, required for the assembly of 30S particles. The polypeptide is Small ribosomal subunit protein uS14c (Pelargonium hortorum (Common geranium)).